We begin with the raw amino-acid sequence, 1030 residues long: Isoleucine--tRNA ligase 2 (1030 aa).

Positions 48–58 match the 'HIGH' region motif; sequence PFATGLPHYGH. The 'KMSKS' region motif lies at 589-593; sequence KMSKR. Residue Lys592 participates in ATP binding.

Belongs to the class-I aminoacyl-tRNA synthetase family. IleS type 2 subfamily. Monomer. It depends on Zn(2+) as a cofactor.

It is found in the cytoplasm. It carries out the reaction tRNA(Ile) + L-isoleucine + ATP = L-isoleucyl-tRNA(Ile) + AMP + diphosphate. Catalyzes the attachment of isoleucine to tRNA(Ile). As IleRS can inadvertently accommodate and process structurally similar amino acids such as valine, to avoid such errors it has two additional distinct tRNA(Ile)-dependent editing activities. One activity is designated as 'pretransfer' editing and involves the hydrolysis of activated Val-AMP. The other activity is designated 'posttransfer' editing and involves deacylation of mischarged Val-tRNA(Ile). Functionally, confers high-level resistance to the antibiotic mupirocin (pseudomonic acid A), an Ile-analog produced by P.fluorescens NCIMB 10586 itself that competitively inhibits activation by Ile-tRNA synthetase, thus inhibiting protein biosynthesis. The chain is Isoleucine--tRNA ligase 2 (ileS2) from Pseudomonas fluorescens.